A 277-amino-acid chain; its full sequence is Large ribosomal subunit protein uL2 (277 aa).

2 disordered regions span residues 35–60 (EKQS…GHKQ) and 225–277 (MNPV…ANKR). The span at 43–53 (RNNNGHITTRH) shows a compositional bias: polar residues.

The protein belongs to the universal ribosomal protein uL2 family. Part of the 50S ribosomal subunit. Forms a bridge to the 30S subunit in the 70S ribosome.

Its function is as follows. One of the primary rRNA binding proteins. Required for association of the 30S and 50S subunits to form the 70S ribosome, for tRNA binding and peptide bond formation. It has been suggested to have peptidyltransferase activity; this is somewhat controversial. Makes several contacts with the 16S rRNA in the 70S ribosome. This Methylobacillus flagellatus (strain ATCC 51484 / DSM 6875 / VKM B-1610 / KT) protein is Large ribosomal subunit protein uL2.